The chain runs to 414 residues: Serine hydroxymethyltransferase (414 aa).

Residues Leu116 and 120–122 contribute to the (6S)-5,6,7,8-tetrahydrofolate site; that span reads GHL. N6-(pyridoxal phosphate)lysine is present on Lys225. Residue 349 to 351 coordinates (6S)-5,6,7,8-tetrahydrofolate; the sequence is SPF.

It belongs to the SHMT family. Homodimer. Pyridoxal 5'-phosphate serves as cofactor.

The protein localises to the cytoplasm. It catalyses the reaction (6R)-5,10-methylene-5,6,7,8-tetrahydrofolate + glycine + H2O = (6S)-5,6,7,8-tetrahydrofolate + L-serine. Its pathway is one-carbon metabolism; tetrahydrofolate interconversion. It participates in amino-acid biosynthesis; glycine biosynthesis; glycine from L-serine: step 1/1. Its function is as follows. Catalyzes the reversible interconversion of serine and glycine with tetrahydrofolate (THF) serving as the one-carbon carrier. This reaction serves as the major source of one-carbon groups required for the biosynthesis of purines, thymidylate, methionine, and other important biomolecules. Also exhibits THF-independent aldolase activity toward beta-hydroxyamino acids, producing glycine and aldehydes, via a retro-aldol mechanism. This Oenococcus oeni (strain ATCC BAA-331 / PSU-1) protein is Serine hydroxymethyltransferase.